A 374-amino-acid chain; its full sequence is Peptide chain release factor 2 (374 aa).

Residue Gln248 is modified to N5-methylglutamine.

Belongs to the prokaryotic/mitochondrial release factor family. Methylated by PrmC. Methylation increases the termination efficiency of RF2.

It is found in the cytoplasm. In terms of biological role, peptide chain release factor 2 directs the termination of translation in response to the peptide chain termination codons UGA and UAA. This is Peptide chain release factor 2 from Thermomicrobium roseum (strain ATCC 27502 / DSM 5159 / P-2).